Consider the following 436-residue polypeptide: Magnesium transporter MRS2-B (436 aa).

Composition is skewed to low complexity over residues 1 to 14 (MSAA…GDSA) and 29 to 54 (VASV…FPGG). Positions 1 to 60 (MSAAAASSAAGDSAKQPLLHHQRGNPPHVASVSSPSLPSAPPGALAGGRRFPGGLDVPNL) are disordered. Residues 176 to 242 (LALEAACSFL…RDEIEQLMDD (67 aa)) are a coiled coil. The next 2 membrane-spanning stretches (helical) occupy residues 372–392 (LLLT…GIFG) and 408–428 (WVLI…LWFF). Residues 392-394 (GMN) carry the Required for magnesium transport activity motif.

It belongs to the CorA metal ion transporter (MIT) (TC 1.A.35.5) family.

Its subcellular location is the membrane. Magnesium transporter that may mediate the influx of magnesium. The sequence is that of Magnesium transporter MRS2-B (MRS2-B) from Oryza sativa subsp. indica (Rice).